The chain runs to 547 residues: ATP synthase subunit beta, mitochondrial (547 aa).

The transit peptide at 1-45 directs the protein to the mitochondrion; that stretch reads MASRRLLSSFLRSSTRRSLRPSFSNPRPSFLTSYCSSPASILRRY. Positions 52-62 are enriched in low complexity; that stretch reads KEPAASKPAGT. A disordered region spans residues 52–74; sequence KEPAASKPAGTAGTGKGTITDEK. 226–233 contacts ATP; it reads GGDWVGKT.

This sequence belongs to the ATPase alpha/beta chains family. F-type ATPases have 2 components, CF(1) - the catalytic core - and CF(0) - the membrane proton channel. CF(1) has five subunits: alpha(3), beta(3), gamma(1), delta(1), epsilon(1). CF(0) has three main subunits: a, b and c.

The protein resides in the mitochondrion. Its subcellular location is the mitochondrion inner membrane. It catalyses the reaction ATP + H2O + 4 H(+)(in) = ADP + phosphate + 5 H(+)(out). Mitochondrial membrane ATP synthase (F(1)F(0) ATP synthase or Complex V) produces ATP from ADP in the presence of a proton gradient across the membrane which is generated by electron transport complexes of the respiratory chain. F-type ATPases consist of two structural domains, F(1) - containing the extramembraneous catalytic core, and F(0) - containing the membrane proton channel, linked together by a central stalk and a peripheral stalk. During catalysis, ATP synthesis in the catalytic domain of F(1) is coupled via a rotary mechanism of the central stalk subunits to proton translocation. Subunits alpha and beta form the catalytic core in F(1). Rotation of the central stalk against the surrounding alpha(3)beta(3) subunits leads to hydrolysis of ATP in three separate catalytic sites on the beta subunits. The sequence is that of ATP synthase subunit beta, mitochondrial (ATPB) from Daucus carota (Wild carrot).